We begin with the raw amino-acid sequence, 268 residues long: MKPIKTSWADEVEADYVDGLPPAKEYIEGEYKYVTEYKYNEDGKKIKVVRTFKIKKQVVSKAVAKRRNWVKFGESSSDKPGPNSQTTMAAEEIFMLFMGSKEFEQTNELQIDPGKNIAKCRICNGEHWSVNCPYKGTAMDSKTMMENKATAAAAAVGDPKSGKYVPPFLKEGGASGKPWARERDDSSAVRISNLSESMTEVDLEELVKKIGPHTKMYLAREKNTGLCKGFAYVHFKFRQDAAAAIEILNGHGYDHLILCVEWSKPQNQ.

Positions 187 to 265 (SAVRISNLSE…LILCVEWSKP (79 aa)) constitute an RRM domain.

It belongs to the eIF-3 subunit G family. In terms of assembly, component of the eukaryotic translation initiation factor 3 (eIF-3) complex. The eIF-3 complex interacts with pix.

The protein resides in the cytoplasm. In terms of biological role, RNA-binding component of the eukaryotic translation initiation factor 3 (eIF-3) complex, which is involved in protein synthesis of a specialized repertoire of mRNAs and, together with other initiation factors, stimulates binding of mRNA and methionyl-tRNAi to the 40S ribosome. The eIF-3 complex specifically targets and initiates translation of a subset of mRNAs involved in cell proliferation. This subunit can bind 18S rRNA. This is Eukaryotic translation initiation factor 3 subunit G-2 from Drosophila willistoni (Fruit fly).